We begin with the raw amino-acid sequence, 152 residues long: Transcriptional regulator MraZ (152 aa).

SpoVT-AbrB domains follow at residues 7–51 (KERH…APDR) and 89–132 (LEMV…DPQR).

It belongs to the MraZ family. In terms of assembly, forms oligomers.

The protein localises to the cytoplasm. The protein resides in the nucleoid. The polypeptide is Transcriptional regulator MraZ (Pelodictyon phaeoclathratiforme (strain DSM 5477 / BU-1)).